Consider the following 287-residue polypeptide: Acetylglutamate kinase (287 aa).

Residues 70 to 71 (GG), Arg-92, and Asn-184 each bind substrate.

The protein belongs to the acetylglutamate kinase family. ArgB subfamily.

The protein resides in the cytoplasm. It catalyses the reaction N-acetyl-L-glutamate + ATP = N-acetyl-L-glutamyl 5-phosphate + ADP. It participates in amino-acid biosynthesis; L-arginine biosynthesis; N(2)-acetyl-L-ornithine from L-glutamate: step 2/4. Its function is as follows. Catalyzes the ATP-dependent phosphorylation of N-acetyl-L-glutamate. The protein is Acetylglutamate kinase of Ruegeria pomeroyi (strain ATCC 700808 / DSM 15171 / DSS-3) (Silicibacter pomeroyi).